The chain runs to 536 residues: GATA zinc finger domain-containing protein 9 (536 aa).

Polar residues-rich tracts occupy residues 1–20 (MTSFLLFNPGSLQQQQQPHS) and 36–55 (CQSSFSTPLGGSNGINNPNA). Disordered regions lie at residues 1–77 (MTSF…LSGS), 183–211 (SSSLSSEDDDCCYETEEDDNGEDGEVVRS), 237–258 (RSAFKKNKKDYHHGSSAGGGGS), 273–342 (QLHY…GFVQ), and 370–423 (ALFS…NISS). Positions 56–72 (TTNNTTTTTTTTTTTTN) are enriched in low complexity. Residues 188 to 206 (SEDDDCCYETEEDDNGEDG) are compositionally biased toward acidic residues. Over residues 237 to 247 (RSAFKKNKKDY) the composition is skewed to basic residues. A compositionally biased stretch (polar residues) spans 273-283 (QLHYSNSMTDN). Composition is skewed to low complexity over residues 318–335 (SNSNNNNNNNNNNNNNNN) and 379–399 (PSPTLGSSCGSSSPGLNNSGN). The segment at 479–504 (CRHCGTTDTPEWRRGPDGRKSLCNAC) adopts a GATA-type zinc-finger fold.

The protein is GATA zinc finger domain-containing protein 9 (gtaI) of Dictyostelium discoideum (Social amoeba).